A 321-amino-acid polypeptide reads, in one-letter code: Taste receptor type 2 member 135 (321 aa).

The Extracellular segment spans residues Met1–Thr28. The chain crosses the membrane as a helical span at residues Leu29–Ile49. At Ala50 to Arg75 the chain is on the cytoplasmic side. The chain crosses the membrane as a helical span at residues Phe76–Phe96. Over Pro97–Asn106 the chain is Extracellular. A helical membrane pass occupies residues Leu107–Tyr127. Residues Cys128–Trp149 are Cytoplasmic-facing. A helical membrane pass occupies residues Val150–Ile170. Topologically, residues Gly171–Lys207 are extracellular. Asn188 is a glycosylation site (N-linked (GlcNAc...) asparagine). The chain crosses the membrane as a helical span at residues Ile208–Ser228. At Leu229–Lys253 the chain is on the cytoplasmic side. Residues Ala254 to Leu274 form a helical membrane-spanning segment. Topologically, residues Ser275–Arg286 are extracellular. Residues Tyr287 to Leu307 form a helical membrane-spanning segment. Residues Ser308–Cys321 lie on the Cytoplasmic side of the membrane.

Belongs to the G-protein coupled receptor T2R family.

It localises to the membrane. Putative taste receptor which may play a role in the perception of bitterness. The sequence is that of Taste receptor type 2 member 135 from Rattus norvegicus (Rat).